Here is a 765-residue protein sequence, read N- to C-terminus: 5-methyltetrahydropteroyltriglutamate--homocysteine methyltransferase 2 (765 aa).

The 5-methyltetrahydropteroyltri-L-glutamate site is built by Lys-18 and Asn-116. Residues 437–439 (IGS) and Glu-490 each bind L-homocysteine. L-methionine-binding positions include 437–439 (IGS) and Glu-490. 5-methyltetrahydropteroyltri-L-glutamate contacts are provided by residues Asp-495, Tyr-518, 521–522 (RC), and Trp-567. Asp-605 contacts L-homocysteine. An L-methionine-binding site is contributed by Asp-605. Residues His-647, Cys-649, His-658, Asp-662, and Glu-671 each contribute to the Zn(2+) site. His-701 (proton donor) is an active-site residue. Cys-733 provides a ligand contact to Zn(2+).

The protein belongs to the vitamin-B12 independent methionine synthase family. It depends on Zn(2+) as a cofactor. Expressed in leaves, stems and siliques.

Its subcellular location is the cytoplasm. It localises to the cytosol. The enzyme catalyses 5-methyltetrahydropteroyltri-L-glutamate + L-homocysteine = tetrahydropteroyltri-L-glutamate + L-methionine. It functions in the pathway amino-acid biosynthesis; L-methionine biosynthesis via de novo pathway; L-methionine from L-homocysteine (MetE route): step 1/1. In terms of biological role, catalyzes the transfer of a methyl group from 5-methyltetrahydrofolate to homocysteine resulting in methionine formation. This chain is 5-methyltetrahydropteroyltriglutamate--homocysteine methyltransferase 2 (MS2), found in Arabidopsis thaliana (Mouse-ear cress).